The following is a 263-amino-acid chain: Small ribosomal subunit protein eS4 (263 aa).

An S4 RNA-binding domain is found at 42 to 104 (LPLIIFLRNK…TGENFRLIYD (63 aa)). A Glycyl lysine isopeptide (Lys-Gly) (interchain with G-Cter in SUMO2) cross-link involves residue Lys-230. Position 233 is an N6-acetyllysine (Lys-233).

This sequence belongs to the eukaryotic ribosomal protein eS4 family. Component of the small ribosomal subunit. Part of the small subunit (SSU) processome, composed of more than 70 proteins and the RNA chaperone small nucleolar RNA (snoRNA) U3. Identified in a IGF2BP1-dependent mRNP granule complex containing untranslated mRNAs.

Its subcellular location is the cytoplasm. It localises to the nucleus. The protein resides in the nucleolus. Functionally, component of the small ribosomal subunit. The ribosome is a large ribonucleoprotein complex responsible for the synthesis of proteins in the cell. Part of the small subunit (SSU) processome, first precursor of the small eukaryotic ribosomal subunit. During the assembly of the SSU processome in the nucleolus, many ribosome biogenesis factors, an RNA chaperone and ribosomal proteins associate with the nascent pre-rRNA and work in concert to generate RNA folding, modifications, rearrangements and cleavage as well as targeted degradation of pre-ribosomal RNA by the RNA exosome. This Oryctolagus cuniculus (Rabbit) protein is Small ribosomal subunit protein eS4 (RPS4X).